Reading from the N-terminus, the 256-residue chain is Coiled-coil domain-containing protein 90B, mitochondrial (256 aa).

A mitochondrion-targeting transit peptide spans 1 to 42 (MRNRWIWRFLRPECSGIRWISSPHGRLSPALRRGFLTTTTKS). A coiled-coil region spans residues 106-164 (AQQEITIQQLMAHLDSIRKDMVILEKSEFANLRAENEKMKIELDQVKQQLINETSRIRA). A helical membrane pass occupies residues 231-253 (TIRYLAASVFTCLAIALGFYRFW).

The protein belongs to the CCDC90 family. In terms of assembly, interacts with MCU.

It localises to the mitochondrion membrane. In Rattus norvegicus (Rat), this protein is Coiled-coil domain-containing protein 90B, mitochondrial (Ccdc90b).